A 326-amino-acid polypeptide reads, in one-letter code: L-threo-3-hydroxyaspartate ammonia-lyase (326 aa).

The residue at position 53 (Lys-53) is an N6-(pyridoxal phosphate)lysine. Residues Asn-80, 179 to 183, and Ser-304 each bind pyridoxal 5'-phosphate; that span reads GGGGL.

Belongs to the serine/threonine dehydratase family. Monomer. Pyridoxal 5'-phosphate is required as a cofactor. It depends on Mn(2+) as a cofactor. The cofactor is Mg(2+). Ca(2+) serves as cofactor.

The catalysed reaction is (3S)-3-hydroxy-L-aspartate = oxaloacetate + NH4(+). With respect to regulation, is strongly inhibited by hydroxylamine and EDTA in vitro. Functionally, catalyzes the deamination of L-threo-3-hydroxyaspartate to oxaloacetate and ammonia. Shows a high specificity towards L-threo-3-hydroxyaspartate as other 3-hydroxyaminoacids, i.e. D,L-erythro- and D-threo-3-hydroxyaspartate, D-threonine, L-threonine, D,L-allothreonine, D-serine, and L-serine, are not substrates for this enzyme. Exhibits no detectable serine racemase activity. Is responsible for the 3-hydroxyaspartate resistance of S.cerevisiae, and thus may be involved in the detoxification of naturally occurring 3-hydroxyaspartate. The polypeptide is L-threo-3-hydroxyaspartate ammonia-lyase (SRY1) (Saccharomyces cerevisiae (strain ATCC 204508 / S288c) (Baker's yeast)).